The primary structure comprises 61 residues: Putative defensin-like protein 72 (61 aa).

4 disulfide bridges follow: Cys21/Cys59, Cys25/Cys48, Cys34/Cys57, and Cys38/Cys58.

This sequence belongs to the DEFL family.

This chain is Putative defensin-like protein 72, found in Arabidopsis thaliana (Mouse-ear cress).